A 334-amino-acid chain; its full sequence is Anthranilate phosphoribosyltransferase (334 aa).

Residues glycine 79, 82–83 (GD), serine 87, 89–92 (NIST), 107–115 (KAGNRSISS), and serine 119 each bind 5-phospho-alpha-D-ribose 1-diphosphate. Glycine 79 contacts anthranilate. Residue serine 91 coordinates Mg(2+). Asparagine 110 lines the anthranilate pocket. Arginine 165 is a binding site for anthranilate. Aspartate 224 and glutamate 225 together coordinate Mg(2+).

This sequence belongs to the anthranilate phosphoribosyltransferase family. Homodimer. Requires Mg(2+) as cofactor.

It carries out the reaction N-(5-phospho-beta-D-ribosyl)anthranilate + diphosphate = 5-phospho-alpha-D-ribose 1-diphosphate + anthranilate. Its pathway is amino-acid biosynthesis; L-tryptophan biosynthesis; L-tryptophan from chorismate: step 2/5. Its function is as follows. Catalyzes the transfer of the phosphoribosyl group of 5-phosphorylribose-1-pyrophosphate (PRPP) to anthranilate to yield N-(5'-phosphoribosyl)-anthranilate (PRA). This is Anthranilate phosphoribosyltransferase from Streptococcus thermophilus (strain ATCC BAA-491 / LMD-9).